The sequence spans 444 residues: Squalene synthase ERG9 (444 aa).

Residues 421–441 traverse the membrane as a helical segment; sequence FNMVLSIILSVLLGFYYIYTL.

Belongs to the phytoene/squalene synthase family. Mg(2+) serves as cofactor.

The protein localises to the endoplasmic reticulum membrane. Its subcellular location is the microsome. It catalyses the reaction 2 (2E,6E)-farnesyl diphosphate + NADPH + H(+) = squalene + 2 diphosphate + NADP(+). It carries out the reaction 2 (2E,6E)-farnesyl diphosphate + NADH + H(+) = squalene + 2 diphosphate + NAD(+). Its pathway is terpene metabolism; lanosterol biosynthesis; lanosterol from farnesyl diphosphate: step 1/3. In terms of biological role, squalene synthase; part of the third module of ergosterol biosynthesis pathway that includes the late steps of the pathway. ERG9 produces squalene from 2 farnesyl pyrophosphate moieties. The third module or late pathway involves the ergosterol synthesis itself through consecutive reactions that mainly occur in the endoplasmic reticulum (ER) membrane. Firstly, the squalene synthase ERG9 catalyzes the condensation of 2 farnesyl pyrophosphate moieties to form squalene, which is the precursor of all steroids. Squalene synthase is crucial for balancing the incorporation of farnesyl diphosphate (FPP) into sterol and nonsterol isoprene synthesis. Secondly, the squalene epoxidase ERG1 catalyzes the stereospecific oxidation of squalene to (S)-2,3-epoxysqualene, which is considered to be a rate-limiting enzyme in steroid biosynthesis. Then, the lanosterol synthase ERG7 catalyzes the cyclization of (S)-2,3 oxidosqualene to lanosterol, a reaction that forms the sterol core. In the next steps, lanosterol is transformed to zymosterol through a complex process involving various demethylation, reduction and desaturation reactions. The lanosterol 14-alpha-demethylase ERG11 (also known as CYP51) catalyzes C14-demethylation of lanosterol to produce 4,4'-dimethyl cholesta-8,14,24-triene-3-beta-ol, which is critical for ergosterol biosynthesis. The C-14 reductase ERG24 reduces the C14=C15 double bond of 4,4-dimethyl-cholesta-8,14,24-trienol to produce 4,4-dimethyl-cholesta-8,24-dienol. 4,4-dimethyl-cholesta-8,24-dienol is substrate of the C-4 demethylation complex ERG25-ERG26-ERG27 in which ERG25 catalyzes the three-step monooxygenation required for the demethylation of 4,4-dimethyl and 4alpha-methylsterols, ERG26 catalyzes the oxidative decarboxylation that results in a reduction of the 3-beta-hydroxy group at the C-3 carbon to an oxo group, and ERG27 is responsible for the reduction of the keto group on the C-3. ERG28 has a role as a scaffold to help anchor ERG25, ERG26 and ERG27 to the endoplasmic reticulum and ERG29 regulates the activity of the iron-containing C4-methylsterol oxidase ERG25. Then, the sterol 24-C-methyltransferase ERG6 catalyzes the methyl transfer from S-adenosyl-methionine to the C-24 of zymosterol to form fecosterol. The C-8 sterol isomerase ERG2 catalyzes the reaction which results in unsaturation at C-7 in the B ring of sterols and thus converts fecosterol to episterol. The sterol-C5-desaturase ERG3 then catalyzes the introduction of a C-5 double bond in the B ring to produce 5-dehydroepisterol. The C-22 sterol desaturase ERG5 further converts 5-dehydroepisterol into ergosta-5,7,22,24(28)-tetraen-3beta-ol by forming the C-22(23) double bond in the sterol side chain. Finally, ergosta-5,7,22,24(28)-tetraen-3beta-ol is substrate of the C-24(28) sterol reductase ERG4 to produce ergosterol. The polypeptide is Squalene synthase ERG9 (Saccharomyces cerevisiae (strain ATCC 204508 / S288c) (Baker's yeast)).